The primary structure comprises 134 residues: Acyl carrier protein, chloroplastic (134 aa).

The N-terminal 51 residues, 1 to 51, are a transit peptide targeting the chloroplast; that stretch reads MATTFSASVSMQATSLATTTRISFQKPVLVSNHGRTNLSFNLSRTRLSISC. In terms of domain architecture, Carrier spans 55–130; sequence QETVEKVSEI…QAAELIEELM (76 aa). O-(pantetheine 4'-phosphoryl)serine is present on serine 90.

This sequence belongs to the acyl carrier protein (ACP) family. 4'-phosphopantetheine is transferred from CoA to a specific serine of apo-ACP by acpS. This modification is essential for activity because fatty acids are bound in thioester linkage to the sulfhydryl of the prosthetic group. In terms of tissue distribution, seed.

The protein resides in the plastid. The protein localises to the chloroplast. It participates in lipid metabolism; fatty acid biosynthesis. In terms of biological role, carrier of the growing fatty acid chain in fatty acid biosynthesis. The chain is Acyl carrier protein, chloroplastic (ACL1.C1) from Brassica napus (Rape).